The sequence spans 1017 residues: Disease resistance protein RML1B (1017 aa).

One can recognise a TIR domain in the interval 12–176 (YKFNVFASFH…KIARDVLDKL (165 aa)). Glu-87 is a catalytic residue. Residues 191-447 (EAHLREIKSL…HIAIFFNKED (257 aa)) enclose the NB-ARC domain. 10 LRR repeats span residues 539–562 (ISRI…QFLK), 583–605 (PCLL…TFNP), 606–628 (EHLV…TQPL), 629–652 (KNLK…SNAT), 654–675 (LEYL…ISHL), 676–698 (HKLE…HMNL), 699–724 (ESLQ…NIRY), 738–760 (CPGL…THLP), 761–782 (TSLT…CFKS), and 784–809 (HQLK…SLLT).

The catalysed reaction is NAD(+) + H2O = ADP-D-ribose + nicotinamide + H(+). Functionally, TIR-NB-LRR receptor-like protein that confers resistance to the pathogen Leptosphaeria maculans (blackleg disease). This is Disease resistance protein RML1B from Arabidopsis thaliana (Mouse-ear cress).